Reading from the N-terminus, the 265-residue chain is Synaptoporin (265 aa).

Over 1–4 the chain is Cytoplasmic; that stretch reads MCMV. The region spanning 1-202 is the MARVEL domain; that stretch reads MCMVIFAPLF…NIWFVFKETG (202 aa). Residues 5–25 traverse the membrane as a helical segment; it reads IFAPLFAMFAFATCGGYSGGL. The Vesicular segment spans residues 26 to 81; sequence RLSVDCVNKTESNLSIDIAFAYPFRLQQVTFEVPTCEGKEQQKLALVGDSSSSAEF. 2 N-linked (GlcNAc...) asparagine glycosylation sites follow: Asn33 and Asn38. Residues 82-102 form a helical membrane-spanning segment; sequence FVTVAVFAFLYSLAATVVYIF. Topologically, residues 103 to 114 are cytoplasmic; that stretch reads FQNKYRENNRGP. A helical membrane pass occupies residues 115–135; that stretch reads LIDFIVTVVFSFLWLVGSSAW. Topologically, residues 136–177 are vesicular; the sequence is AKGLSDVKVATDPKEVLLLMSACKQPSNKCMAVHSPVMSSLN. Residues 178-198 form a helical membrane-spanning segment; the sequence is TSVVFGFLNFILWAGNIWFVF. At 199-265 the chain is on the cytoplasmic side; the sequence is KETGWHSSGQ…SGPTSFNNQI (67 aa). 5 tandem repeats follow at residues 210-214, 222-226, 227-231, 232-236, and 238-242. The segment at 210–242 is 5 X approximate repeats; that stretch reads YLSDPMEKHSSSYNQGRYNQESYGSSGGYSQQA. Residue Ser212 is modified to Phosphoserine. A compositionally biased stretch (polar residues) spans 221–230; sequence SYNQGRYNQE. The tract at residues 221–265 is disordered; that stretch reads SYNQGRYNQESYGSSGGYSQQANLGPTSDEFGQQPSGPTSFNNQI. Positions 240–265 are enriched in polar residues; that stretch reads QQANLGPTSDEFGQQPSGPTSFNNQI.

This sequence belongs to the synaptophysin/synaptobrevin family.

The protein localises to the cytoplasmic vesicle. It is found in the secretory vesicle. Its subcellular location is the synaptic vesicle membrane. The protein resides in the synapse. It localises to the synaptosome. Functionally, intrinsic membrane protein of small synaptic vesicles. Probable vesicular channel protein. This Mus musculus (Mouse) protein is Synaptoporin (Synpr).